We begin with the raw amino-acid sequence, 364 residues long: UDP-N-acetylglucosamine--N-acetylmuramyl-(pentapeptide) pyrophosphoryl-undecaprenol N-acetylglucosamine transferase (364 aa).

UDP-N-acetyl-alpha-D-glucosamine-binding positions include 10-12 (TGG), N124, R166, S196, and Q297.

Belongs to the glycosyltransferase 28 family. MurG subfamily.

The protein resides in the cell membrane. The enzyme catalyses di-trans,octa-cis-undecaprenyl diphospho-N-acetyl-alpha-D-muramoyl-L-alanyl-D-glutamyl-meso-2,6-diaminopimeloyl-D-alanyl-D-alanine + UDP-N-acetyl-alpha-D-glucosamine = di-trans,octa-cis-undecaprenyl diphospho-[N-acetyl-alpha-D-glucosaminyl-(1-&gt;4)]-N-acetyl-alpha-D-muramoyl-L-alanyl-D-glutamyl-meso-2,6-diaminopimeloyl-D-alanyl-D-alanine + UDP + H(+). The protein operates within cell wall biogenesis; peptidoglycan biosynthesis. In terms of biological role, cell wall formation. Catalyzes the transfer of a GlcNAc subunit on undecaprenyl-pyrophosphoryl-MurNAc-pentapeptide (lipid intermediate I) to form undecaprenyl-pyrophosphoryl-MurNAc-(pentapeptide)GlcNAc (lipid intermediate II). The polypeptide is UDP-N-acetylglucosamine--N-acetylmuramyl-(pentapeptide) pyrophosphoryl-undecaprenol N-acetylglucosamine transferase (Caldanaerobacter subterraneus subsp. tengcongensis (strain DSM 15242 / JCM 11007 / NBRC 100824 / MB4) (Thermoanaerobacter tengcongensis)).